A 274-amino-acid chain; its full sequence is Homeobox-leucine zipper protein HAT9 (274 aa).

A compositionally biased stretch (low complexity) spans serine 64 to serine 74. The segment at serine 64–glutamate 96 is disordered. A DNA-binding region (homeobox) is located at residues serine 110–glutamine 169. Positions leucine 177 to leucine 198 are leucine-zipper.

The protein belongs to the HD-ZIP homeobox family. Class II subfamily.

Its subcellular location is the nucleus. In terms of biological role, probable transcription factor. The polypeptide is Homeobox-leucine zipper protein HAT9 (HAT9) (Arabidopsis thaliana (Mouse-ear cress)).